The following is a 528-amino-acid chain: Protein arginine N-methyltransferase 3 (528 aa).

Residues 1-42 (MCSLAAGNGQGAELGPEPLELSDSGDDAGWEDEDADAEPAQG) form a disordered region. At C2 the chain carries N-acetylcysteine. Residues S22 and S24 each carry the phosphoserine modification. The segment covering 23–37 (DSGDDAGWEDEDADA) has biased composition (acidic residues). The segment at 46–69 (TPCLFCDRLFRSAEETFSHCKLEH) adopts a C2H2-type zinc-finger fold. S169 is modified (phosphoserine). The mediates interaction with ALDH1A1 stretch occupies residues 184–528 (MKQFAQDFVM…NSSTQTYSLQ (345 aa)). An SAM-dependent MTase PRMT-type domain is found at 214 to 528 (DGVYFSSYGH…NSSTQTYSLQ (315 aa)). S-adenosyl-L-homocysteine-binding residues include R236, G260, D282, S284, I310, and E311. Active-site residues include E326 and E335.

This sequence belongs to the class I-like SAM-binding methyltransferase superfamily. Protein arginine N-methyltransferase family. As to quaternary structure, monomer and homodimer. Interacts with EPB41L3 (via FERM domain); the interaction is direct and inhibits the protein-arginine N-methyltransferase activity of PRMT3. Interacts with the 40S ribosomal protein RPS2. Interacts with ALDH1A1; the interaction is direct, inhibits ALDH1A1 aldehyde dehydrogenase activity and is independent of the methyltransferase activity of PRMT3. In terms of tissue distribution, ubiquitously expressed.

The protein resides in the cytoplasm. The protein localises to the cytosol. It is found in the nucleus. The catalysed reaction is L-arginyl-[protein] + S-adenosyl-L-methionine = N(omega)-methyl-L-arginyl-[protein] + S-adenosyl-L-homocysteine + H(+). The enzyme catalyses L-arginyl-[protein] + 2 S-adenosyl-L-methionine = N(omega),N(omega)-dimethyl-L-arginyl-[protein] + 2 S-adenosyl-L-homocysteine + 2 H(+). With respect to regulation, inhibited by N-ethylmaleimide and high concentrations of zinc chloride. Protein-arginine N-methyltransferase that catalyzes both the monomethylation and asymmetric dimethylation of the guanidino nitrogens of arginine residues in target proteins, and therefore falls into the group of type I methyltransferases. Catalyzes the asymmetric arginine dimethylation at multiple sites in the Arg/Gly-rich region of small ribosomal subunit protein uS5/RPS2. Also appears to methylate other ribosomal proteins. May regulate retinoic acid synthesis and signaling by inhibiting ALDH1A1 retinal dehydrogenase activity. Contributes to methylation of histone H4 'Arg-3', a specific tag for epigenetic transcriptional activation. Promotes osteogenesis. This chain is Protein arginine N-methyltransferase 3, found in Rattus norvegicus (Rat).